Here is a 139-residue protein sequence, read N- to C-terminus: ATP synthase epsilon chain (139 aa).

It belongs to the ATPase epsilon chain family. As to quaternary structure, F-type ATPases have 2 components, CF(1) - the catalytic core - and CF(0) - the membrane proton channel. CF(1) has five subunits: alpha(3), beta(3), gamma(1), delta(1), epsilon(1). CF(0) has three main subunits: a, b and c.

The protein localises to the cell membrane. Its function is as follows. Produces ATP from ADP in the presence of a proton gradient across the membrane. The protein is ATP synthase epsilon chain of Symbiobacterium thermophilum (strain DSM 24528 / JCM 14929 / IAM 14863 / T).